A 351-amino-acid polypeptide reads, in one-letter code: Transcription factor bHLH93 (351 aa).

The bHLH domain maps to 174-223 (GQPSKNLMAERRRRKRLNDRLSMLRSIVPKISKMDRTSILGDAIDYMKEL).

As to quaternary structure, homodimer. Interacts with FAMA. Broadly expressed.

Its subcellular location is the nucleus. Transcription factor. May be involved in the differentiation of stomatal guard cells. This is Transcription factor bHLH93 (BHLH93) from Arabidopsis thaliana (Mouse-ear cress).